A 930-amino-acid polypeptide reads, in one-letter code: Isoleucine--tRNA ligase (930 aa).

A 'HIGH' region motif is present at residues 57–67; the sequence is PYANGNIHVGH. Glu-554 is an L-isoleucyl-5'-AMP binding site. The 'KMSKS' region signature appears at 595-599; that stretch reads KMSKS. Lys-598 is a binding site for ATP. Residues Cys-888, Cys-891, Cys-908, and Cys-911 each coordinate Zn(2+).

This sequence belongs to the class-I aminoacyl-tRNA synthetase family. IleS type 1 subfamily. As to quaternary structure, monomer. Zn(2+) serves as cofactor.

It localises to the cytoplasm. It catalyses the reaction tRNA(Ile) + L-isoleucine + ATP = L-isoleucyl-tRNA(Ile) + AMP + diphosphate. In terms of biological role, catalyzes the attachment of isoleucine to tRNA(Ile). As IleRS can inadvertently accommodate and process structurally similar amino acids such as valine, to avoid such errors it has two additional distinct tRNA(Ile)-dependent editing activities. One activity is designated as 'pretransfer' editing and involves the hydrolysis of activated Val-AMP. The other activity is designated 'posttransfer' editing and involves deacylation of mischarged Val-tRNA(Ile). This is Isoleucine--tRNA ligase from Streptococcus pneumoniae serotype 4 (strain ATCC BAA-334 / TIGR4).